The chain runs to 415 residues: Serine/threonine transporter SstT (415 aa).

Helical transmembrane passes span 21–41 (ILLG…AALA), 45–65 (LGTL…LMLV), 83–103 (ILFL…VLSV), 142–162 (ALLN…GLAF), 193–213 (LGIF…ALWG), 217–237 (LLMV…PLIV), 299–319 (MAGA…TLGI), 331–351 (VVAS…LLLI), and 358–378 (FGIS…IGVL).

Belongs to the dicarboxylate/amino acid:cation symporter (DAACS) (TC 2.A.23) family.

It is found in the cell inner membrane. It catalyses the reaction L-serine(in) + Na(+)(in) = L-serine(out) + Na(+)(out). The catalysed reaction is L-threonine(in) + Na(+)(in) = L-threonine(out) + Na(+)(out). Its function is as follows. Involved in the import of serine and threonine into the cell, with the concomitant import of sodium (symport system). The protein is Serine/threonine transporter SstT of Pectobacterium carotovorum subsp. carotovorum (strain PC1).